A 502-amino-acid polypeptide reads, in one-letter code: Nondiscriminating glutamyl-tRNA synthetase EARS2, mitochondrial (502 aa).

The N-terminal 20 residues, 1 to 20 (MAGMLREVCGAAASGLRVRF), are a transit peptide targeting the mitochondrion. 19–21 (RFG) contributes to the L-glutamate binding site. A 'HIGH' region motif is present at residues 24-32 (PTGFLHLGG). H29 contributes to the ATP binding site. Residues E55, 207 to 211 (YHLAN), and R225 contribute to the L-glutamate site. Residues E228 and 263–267 (KLSKR) each bind ATP. Positions 263-267 (KLSKR) match the 'KMSKS' region motif.

The protein belongs to the class-I aminoacyl-tRNA synthetase family. Glutamate--tRNA ligase type 1 subfamily.

It localises to the mitochondrion matrix. The catalysed reaction is tRNA(Glx) + L-glutamate + ATP = L-glutamyl-tRNA(Glx) + AMP + diphosphate. It catalyses the reaction tRNA(Glu) + L-glutamate + ATP = L-glutamyl-tRNA(Glu) + AMP + diphosphate. It carries out the reaction tRNA(Gln) + L-glutamate + ATP = L-glutamyl-tRNA(Gln) + AMP + diphosphate. Functionally, non-discriminating glutamyl-tRNA synthetase that catalyzes aminoacylation of both mitochondrial tRNA(Glu) and tRNA(Gln) and participates in RNA aminoacylation for mitochondrial protein translation. Attachs glutamate to tRNA(Glu) or tRNA(Gln) in a two-step reaction: glutamate is first activated by ATP to form Glu-AMP and then transferred to the acceptor end of tRNA(Glu) or tRNA(Gln). This is Nondiscriminating glutamyl-tRNA synthetase EARS2, mitochondrial from Gallus gallus (Chicken).